The primary structure comprises 109 residues: Thioredoxin 2 (109 aa).

The Thioredoxin domain occupies 2–109; it reads SGKYFEATDQ…IAKKLDEHIG (108 aa). C33 and C36 form a disulfide bridge.

Belongs to the thioredoxin family.

Its function is as follows. Participates in various redox reactions through the reversible oxidation of its active center dithiol to a disulfide and catalyzes dithiol-disulfide exchange reactions. The chain is Thioredoxin 2 (trx2) from Chlorobaculum tepidum (strain ATCC 49652 / DSM 12025 / NBRC 103806 / TLS) (Chlorobium tepidum).